Reading from the N-terminus, the 149-residue chain is Calmodulin-like protein 3 (149 aa).

EF-hand domains follow at residues 8 to 43, 44 to 79, 81 to 116, and 117 to 149; these read EQIA…LGQN, PTEA…KMKD, DSEE…LGEK, and LSDE…LVSK. The Ca(2+) site is built by aspartate 21, aspartate 23, aspartate 25, serine 27, glutamate 32, aspartate 57, aspartate 59, asparagine 61, threonine 63, glutamate 68, aspartate 94, aspartate 96, asparagine 98, glutamate 105, aspartate 130, aspartate 132, aspartate 134, glutamine 136, and glutamate 141.

This sequence belongs to the calmodulin family. As to quaternary structure, interacts with MYO10, the interaction is calcium-dependent and essential for MYO10 function in filopodial extension.

Functionally, may function as a specific light chain of unconventional myosin-10 (MYO10), also enhances MYO10 translation, possibly by acting as a chaperone for the emerging MYO10 heavy chain protein. May compete with calmodulin by binding, with different affinities, to cellular substrates. The chain is Calmodulin-like protein 3 (Calml3) from Mus musculus (Mouse).